Consider the following 292-residue polypeptide: Cytochrome c1, heme protein, mitochondrial (292 aa).

The transit peptide at 1 to 46 (MFRSFSTAAKQAVKGTYVQRAIVGGAAVVGIGASTMLYADSLTADA) directs the protein to the mitochondrion. Residues 47–253 (MTAAEHGLHA…SEPEHDERKR (207 aa)) are Mitochondrial intermembrane-facing. The Cytochrome c domain maps to 73-226 (SSIRRGYQVY…DLVEYEDGTP (154 aa)). Cys86, Cys89, and His90 together coordinate heme c. A disordered region spans residues 117 to 137 (FEYDDEPDDQGNPKKRPGKLA). Met210 serves as a coordination point for heme c. A helical transmembrane segment spans residues 254-272 (LGLKAMIVLSSLYLLSVWV). The Mitochondrial matrix segment spans residues 273-292 (KKFKWASIKSRKIVFNPPKK).

This sequence belongs to the cytochrome c family. Component of the ubiquinol-cytochrome c oxidoreductase (cytochrome b-c1 complex, complex III, CIII), a multisubunit enzyme composed of 3 respiratory subunits cytochrome b, cytochrome c1 and Rieske protein, 2 core protein subunits, and additional low-molecular weight protein subunits. The complex exists as an obligatory dimer and forms supercomplexes (SCs) in the inner mitochondrial membrane with cytochrome c oxidase (complex IV, CIV). Heme c is required as a cofactor.

The protein resides in the mitochondrion inner membrane. It catalyses the reaction a quinol + 2 Fe(III)-[cytochrome c](out) = a quinone + 2 Fe(II)-[cytochrome c](out) + 2 H(+)(out). Functionally, component of the ubiquinol-cytochrome c oxidoreductase, a multisubunit transmembrane complex that is part of the mitochondrial electron transport chain which drives oxidative phosphorylation. The respiratory chain contains 3 multisubunit complexes succinate dehydrogenase (complex II, CII), ubiquinol-cytochrome c oxidoreductase (cytochrome b-c1 complex, complex III, CIII) and cytochrome c oxidase (complex IV, CIV), that cooperate to transfer electrons derived from NADH and succinate to molecular oxygen, creating an electrochemical gradient over the inner membrane that drives transmembrane transport and the ATP synthase. The cytochrome b-c1 complex catalyzes electron transfer from ubiquinol to cytochrome c, linking this redox reaction to translocation of protons across the mitochondrial inner membrane, with protons being carried across the membrane as hydrogens on the quinol. In the process called Q cycle, 2 protons are consumed from the matrix, 4 protons are released into the intermembrane space and 2 electrons are passed to cytochrome c. Cytochrome c1 is a catalytic core subunit containing a c-type heme. It transfers electrons from the [2Fe-2S] iron-sulfur cluster of the Rieske protein to cytochrome c. The protein is Cytochrome c1, heme protein, mitochondrial (CYT1) of Kluyveromyces lactis (strain ATCC 8585 / CBS 2359 / DSM 70799 / NBRC 1267 / NRRL Y-1140 / WM37) (Yeast).